A 270-amino-acid polypeptide reads, in one-letter code: UPF0246 protein Psyc_0554 (270 aa).

Belongs to the UPF0246 family.

This chain is UPF0246 protein Psyc_0554, found in Psychrobacter arcticus (strain DSM 17307 / VKM B-2377 / 273-4).